The following is a 618-amino-acid chain: Probable peptide transporter ptr2 (618 aa).

A Phosphoserine modification is found at S22. Y23 is subject to Phosphotyrosine. S25 and S33 each carry phosphoserine. A disordered region spans residues 26–50; that stretch reads KEKKADGSATINTADEQSSTDELQK. A compositionally biased stretch (polar residues) spans 34 to 50; that stretch reads ATINTADEQSSTDELQK. A Phosphothreonine modification is found at T35. Phosphoserine is present on S44. Phosphothreonine is present on T45. 2 positions are modified to phosphoserine: S51 and S53. Position 54 is a phosphothreonine (T54). 10 consecutive transmembrane segments (helical) span residues 131–151, 161–181, 187–207, 247–267, 273–293, 400–420, 430–450, 475–495, 510–530, and 541–561; these read GLSN…ALIA, IVCS…TAIP, GKSM…TGGI, YMIF…TTSL, FVYA…ILAV, FDSI…YPLL, ILRI…AAVL, VWIQ…ASIT, SIIT…SICI, and WMYT…WVCF. S594 carries the phosphoserine modification. T618 is subject to Phosphothreonine.

It belongs to the major facilitator superfamily. Proton-dependent oligopeptide transporter (POT/PTR) (TC 2.A.17) family.

Its subcellular location is the membrane. Functionally, uptake of small peptides. The protein is Probable peptide transporter ptr2 (ptr2) of Schizosaccharomyces pombe (strain 972 / ATCC 24843) (Fission yeast).